The sequence spans 249 residues: UPF0309 protein GTNG_1302 (249 aa).

Positions 31-214 constitute an SIS domain; that stretch reads VSKAVQNGGI…ALMAENGVEP (184 aa).

It belongs to the UPF0309 family.

The sequence is that of UPF0309 protein GTNG_1302 from Geobacillus thermodenitrificans (strain NG80-2).